The following is a 149-amino-acid chain: Nucleoside diphosphate kinase (149 aa).

Lysine 9, phenylalanine 57, arginine 85, threonine 91, arginine 102, and asparagine 112 together coordinate ATP. Histidine 115 serves as the catalytic Pros-phosphohistidine intermediate.

This sequence belongs to the NDK family. In terms of assembly, homotetramer. Mg(2+) is required as a cofactor.

The protein resides in the cytoplasm. The enzyme catalyses a 2'-deoxyribonucleoside 5'-diphosphate + ATP = a 2'-deoxyribonucleoside 5'-triphosphate + ADP. The catalysed reaction is a ribonucleoside 5'-diphosphate + ATP = a ribonucleoside 5'-triphosphate + ADP. Functionally, major role in the synthesis of nucleoside triphosphates other than ATP. The ATP gamma phosphate is transferred to the NDP beta phosphate via a ping-pong mechanism, using a phosphorylated active-site intermediate. The sequence is that of Nucleoside diphosphate kinase from Staphylococcus aureus (strain Mu3 / ATCC 700698).